Here is a 318-residue protein sequence, read N- to C-terminus: Mitochondrial thiamine pyrophosphate carrier (318 aa).

Solcar repeat units follow at residues 13-106 (ISNV…LTEL), 116-202 (RDFS…LKRA), and 214-309 (NGNF…FCNF). Residues 19–39 (AVAGSVSGLVTRVLISPLDVI) traverse the membrane as a helical segment. Ser-51 is modified (phosphoserine). 4 helical membrane-spanning segments follow: residues 87-107 (LLSI…TELV), 122-142 (FLCG…VDVL), 173-193 (VFYK…GFQF), and 220-240 (LLCG…LDLF). The Substrate recognition signature appears at 241–246 (KKRLQV). The chain crosses the membrane as a helical span at residues 293 to 313 (ALSTGLVFFWYELFCNFFHHM).

It belongs to the mitochondrial carrier (TC 2.A.29) family.

It is found in the mitochondrion membrane. The enzyme catalyses thiamine phosphate(out) + thiamine diphosphate(in) = thiamine phosphate(in) + thiamine diphosphate(out). In terms of biological role, mitochondrial transporter mediating uptake of thiamine diphosphate into mitochondria. It is not clear if the antiporter activity is affected by the membrane potential or by the proton electrochemical gradient. This chain is Mitochondrial thiamine pyrophosphate carrier (SLC25A19), found in Bos taurus (Bovine).